Reading from the N-terminus, the 160-residue chain is Cyclic pyranopterin monophosphate synthase (160 aa).

Residues 76 to 78 (LCH) and 114 to 115 (ME) each bind substrate. D129 is an active-site residue.

This sequence belongs to the MoaC family. As to quaternary structure, homohexamer; trimer of dimers.

It carries out the reaction (8S)-3',8-cyclo-7,8-dihydroguanosine 5'-triphosphate = cyclic pyranopterin phosphate + diphosphate. It functions in the pathway cofactor biosynthesis; molybdopterin biosynthesis. Functionally, catalyzes the conversion of (8S)-3',8-cyclo-7,8-dihydroguanosine 5'-triphosphate to cyclic pyranopterin monophosphate (cPMP). This chain is Cyclic pyranopterin monophosphate synthase, found in Saccharophagus degradans (strain 2-40 / ATCC 43961 / DSM 17024).